A 311-amino-acid polypeptide reads, in one-letter code: Methionyl-tRNA formyltransferase (311 aa).

Residue 110–113 (SLLP) participates in (6S)-5,6,7,8-tetrahydrofolate binding.

It belongs to the Fmt family.

It catalyses the reaction L-methionyl-tRNA(fMet) + (6R)-10-formyltetrahydrofolate = N-formyl-L-methionyl-tRNA(fMet) + (6S)-5,6,7,8-tetrahydrofolate + H(+). Attaches a formyl group to the free amino group of methionyl-tRNA(fMet). The formyl group appears to play a dual role in the initiator identity of N-formylmethionyl-tRNA by promoting its recognition by IF2 and preventing the misappropriation of this tRNA by the elongation apparatus. This chain is Methionyl-tRNA formyltransferase, found in Streptococcus equi subsp. equi (strain 4047).